Consider the following 768-residue polypeptide: Ral guanine nucleotide dissociation stimulator-like 1 (768 aa).

Positions 65 to 196 (KIRTIKAGTL…RAQNLLEQFQ (132 aa)) constitute an N-terminal Ras-GEF domain. The 270-residue stretch at 232 to 501 (SEDLVAEQLT…YALSCEIEAA (270 aa)) folds into the Ras-GEF domain. The residue at position 520 (Ser-520) is a Phosphoserine. The disordered stretch occupies residues 530-623 (PGSTPTKEQP…PPTCNNNPKI (94 aa)). Composition is skewed to low complexity over residues 541–561 (SAASGSSGESMDSVSVSSCES) and 586–596 (ESSSSCSSIHS). Residues 597-621 (MDTNSSGMSSLINPLSSPPTCNNNP) are compositionally biased toward polar residues. Residues 648–735 (DTCIIRISVE…FDFILRKKNS (88 aa)) enclose the Ras-associating domain.

As to quaternary structure, interacts with Ras.

In terms of biological role, probable guanine nucleotide exchange factor. This chain is Ral guanine nucleotide dissociation stimulator-like 1 (Rgl1), found in Mus musculus (Mouse).